Consider the following 826-residue polypeptide: Lysine-specific histone demethylase 1B (826 aa).

Basic residues predominate over residues 1–11 (MAASRGRSKKR). Residues 1–46 (MAASRGRSKKRSNLELSPDNLPLRSSGRQAKKKAVEIPDEDEDGSS) form a disordered region. Ser-17 and Ser-26 each carry phosphoserine. The Zn(2+) site is built by Cys-53, Cys-58, Cys-65, Cys-73, His-84, His-90, Cys-92, Cys-95, Cys-142, Cys-147, Cys-169, and Cys-185. The segment at 133–193 (DQQLPYWVQC…HCSFPEDLRV (61 aa)) adopts a CW-type zinc-finger fold. At Ser-253 the chain carries Phosphoserine. Positions 279–298 (YQPNECGKALCVRPDVMELD) are GLYR1-binding. The 99-residue stretch at 281-379 (PNECGKALCV…TGVLTVAAGQ (99 aa)) folds into the SWIRM domain. Residue 389–445 (KSVLVVGAGPAGLAAARQLHNFGMKVTVLEAKDRIGGRVWDDKSFKGVVVGRGPQIV) participates in FAD binding. 3 histone H3-binding regions span residues 444 to 473 (IVNG…RCDL), 493 to 504 (FNALLDVVSEWR), and 544 to 578 (FHLS…AGDH). Residues 570 to 572 (FFA) are GLYR1-binding. Residues Val-604, Glu-799, and 807–809 (QTV) contribute to the FAD site. Positions 802–818 (NRHFPQTVTGAYLSGVR) are GLYR1-binding.

It belongs to the flavin monoamine oxidase family. Interacts with its cofactor GLYR1 at nucleosomes; this interaction stimulates H3K4me1 and H3K4me2 demethylation. In contrast to KDM1A, does not form a complex with RCOR1/CoREST. Possible accessory component of the polycomb repressive deubiquitinase (PR-DUB) complex, at least composed of BAP1, one of ASXL1, ASXL2 or (probably) ASXL3 and one of MBD5 or MBD6. The PR-DUB core associates with a number of accessory proteins, including FOXK1, FOXK2, KDM1B, HCFC1 and OGT; KDM1B specifically associates with ASXL2 PR-DUB complexes. FAD serves as cofactor. Zn(2+) is required as a cofactor. In terms of tissue distribution, expressed in growing oocytes and in intestinal gland.

The protein resides in the nucleus. Its subcellular location is the chromosome. The enzyme catalyses N(6),N(6)-dimethyl-L-lysyl(4)-[histone H3] + 2 A + 2 H2O = L-lysyl(4)-[histone H3] + 2 formaldehyde + 2 AH2. The catalysed reaction is N(6)-methyl-L-lysyl(4)-[histone H3] + A + H2O = L-lysyl(4)-[histone H3] + formaldehyde + AH2. Inhibited by tranylcypromine, but not by pargyline, deprenyl or rasagiline. Histone H3K4me1 and H3K4me2 demethylase activity is inhibited by DNA, this inhibition is released in complex with GLYR1. In terms of biological role, histone demethylase that demethylates 'Lys-4' of histone H3, a specific tag for epigenetic transcriptional activation, thereby acting as a corepressor. Required for de novo DNA methylation of a subset of imprinted genes during oogenesis. Acts by oxidizing the substrate by FAD to generate the corresponding imine that is subsequently hydrolyzed. Demethylates both mono- and di-methylated 'Lys-4' of histone H3. Has no effect on tri-methylated 'Lys-4', mono-, di- or tri-methylated 'Lys-9', mono-, di- or tri-methylated 'Lys-27', mono-, di- or tri-methylated 'Lys-36' of histone H3, or on mono-, di- or tri-methylated 'Lys-20' of histone H4. Its function is as follows. Histone demethylase that demethylates 'Lys-4' of histone H3, a specific tag for epigenetic transcriptional activation, thereby acting as a corepressor. Required for de novo DNA methylation of a subset of imprinted genes during oogenesis. Acts by oxidizing the substrate by FAD to generate the corresponding imine that is subsequently hydrolyzed. Demethylates both mono- and di-methylated 'Lys-4' of histone H3. Has no effect on tri-methylated 'Lys-4', mono-, di- or tri-methylated 'Lys-9', mono-, di- or tri-methylated 'Lys-27', mono-, di- or tri-methylated 'Lys-36' of histone H3, or on mono-, di- or tri-methylated 'Lys-20' of histone H4. Alone, it is unable to demethylate H3K4me on nucleosomes and requires the presence of GLYR1 to achieve such activity, they form a multifunctional enzyme complex that modifies transcribed chromatin and facilitates Pol II transcription through nucleosomes. The sequence is that of Lysine-specific histone demethylase 1B from Mus musculus (Mouse).